The chain runs to 280 residues: Ribosomal RNA small subunit methyltransferase A (280 aa).

S-adenosyl-L-methionine-binding residues include Asn30, Val32, Gly57, Glu78, Asp108, and Asn125.

It belongs to the class I-like SAM-binding methyltransferase superfamily. rRNA adenine N(6)-methyltransferase family. RsmA subfamily.

The protein resides in the cytoplasm. It carries out the reaction adenosine(1518)/adenosine(1519) in 16S rRNA + 4 S-adenosyl-L-methionine = N(6)-dimethyladenosine(1518)/N(6)-dimethyladenosine(1519) in 16S rRNA + 4 S-adenosyl-L-homocysteine + 4 H(+). In terms of biological role, specifically dimethylates two adjacent adenosines (A1518 and A1519) in the loop of a conserved hairpin near the 3'-end of 16S rRNA in the 30S particle. May play a critical role in biogenesis of 30S subunits. The sequence is that of Ribosomal RNA small subunit methyltransferase A from Leifsonia xyli subsp. xyli (strain CTCB07).